A 662-amino-acid polypeptide reads, in one-letter code: PAN2-PAN3 deadenylation complex subunit PAN3 (662 aa).

Disordered regions lie at residues 1-29 and 53-133; these read MASAGKPALDDSRRGTGSPKIKGRENAKD and DPHK…DTVT. A C3H1-type zinc finger spans residues 26 to 55; sequence NAKDTLCRNITIYGRCRYEDKGCAFNHDPH. Positions 75–102 are enriched in low complexity; it reads SFTPSLLSSNGSSPTSTPATTKKMTTIS. A compositionally biased stretch (polar residues) spans 115–133; sequence SVVSRSNASTPGLRQDTVT. The segment at 263-525 is pseudokinase domain; that stretch reads QTLPNTQLPA…NIDVFITGIS (263 aa). Residues Arg-315, 364–371, and 425–426 each bind ATP; these read DYHPLSKT and SK. Residues 526–564 are a coiled coil; sequence SQLMSTFDSALHLDDQLTSDLSRELENGRLVRLMAKLNF. Residues 565–662 form a knob domain region; the sequence is VNERPEYEHD…ALMKPARRMH (98 aa).

This sequence belongs to the protein kinase superfamily. PAN3 family. In terms of assembly, homodimer. Forms a heterotrimer with a catalytic subunit pan2 to form the poly(A)-nuclease (PAN) deadenylation complex. Interacts (via PAM-2 motif) with poly(A)-binding protein pab1 (via PABC domain), conferring substrate specificity of the enzyme complex.

It is found in the cytoplasm. Its function is as follows. Regulatory subunit of the poly(A)-nuclease (PAN) deadenylation complex, one of two cytoplasmic mRNA deadenylases involved in mRNA turnover. PAN specifically shortens poly(A) tails of RNA and the activity is stimulated by poly(A)-binding protein pab1. PAN deadenylation is followed by rapid degradation of the shortened mRNA tails by the CCR4-NOT complex. Deadenylated mRNAs are then degraded by two alternative mechanisms, namely exosome-mediated 3'-5' exonucleolytic degradation, or deadenylation-dependent mRNA decaping and subsequent 5'-3' exonucleolytic degradation by xrn1. May also be involved in post-transcriptional maturation of mRNA poly(A) tails. pan3 acts as a positive regulator for PAN activity, recruiting the catalytic subunit pan2 to mRNA via its interaction with RNA and with pab1. This chain is PAN2-PAN3 deadenylation complex subunit PAN3, found in Aspergillus fumigatus (strain ATCC MYA-4609 / CBS 101355 / FGSC A1100 / Af293) (Neosartorya fumigata).